The primary structure comprises 73 residues: Translation initiation factor IF-1 (73 aa).

Positions M1–R73 constitute an S1-like domain.

This sequence belongs to the IF-1 family. Component of the 30S ribosomal translation pre-initiation complex which assembles on the 30S ribosome in the order IF-2 and IF-3, IF-1 and N-formylmethionyl-tRNA(fMet); mRNA recruitment can occur at any time during PIC assembly.

The protein localises to the cytoplasm. One of the essential components for the initiation of protein synthesis. Stabilizes the binding of IF-2 and IF-3 on the 30S subunit to which N-formylmethionyl-tRNA(fMet) subsequently binds. Helps modulate mRNA selection, yielding the 30S pre-initiation complex (PIC). Upon addition of the 50S ribosomal subunit IF-1, IF-2 and IF-3 are released leaving the mature 70S translation initiation complex. This chain is Translation initiation factor IF-1, found in Chlamydia abortus (strain DSM 27085 / S26/3) (Chlamydophila abortus).